Reading from the N-terminus, the 191-residue chain is Ribonuclease HII (191 aa).

The region spanning 16-191 is the RNase H type-2 domain; that stretch reads INLIGIDEAG…KLHRKSFKLL (176 aa). A divalent metal cation-binding residues include Asp22, Glu23, and Asp110.

Belongs to the RNase HII family. Mn(2+) is required as a cofactor. The cofactor is Mg(2+).

The protein localises to the cytoplasm. It carries out the reaction Endonucleolytic cleavage to 5'-phosphomonoester.. In terms of biological role, endonuclease that specifically degrades the RNA of RNA-DNA hybrids. This chain is Ribonuclease HII (rnhB), found in Campylobacter jejuni subsp. jejuni serotype O:2 (strain ATCC 700819 / NCTC 11168).